A 315-amino-acid chain; its full sequence is 4-hydroxy-3-methylbut-2-enyl diphosphate reductase (315 aa).

Cys-12 provides a ligand contact to [4Fe-4S] cluster. Residues His-41 and His-74 each coordinate (2E)-4-hydroxy-3-methylbut-2-enyl diphosphate. His-41 and His-74 together coordinate dimethylallyl diphosphate. Positions 41 and 74 each coordinate isopentenyl diphosphate. Cys-96 is a binding site for [4Fe-4S] cluster. Position 124 (His-124) interacts with (2E)-4-hydroxy-3-methylbut-2-enyl diphosphate. Residue His-124 participates in dimethylallyl diphosphate binding. Isopentenyl diphosphate is bound at residue His-124. Glu-126 functions as the Proton donor in the catalytic mechanism. Thr-168 contacts (2E)-4-hydroxy-3-methylbut-2-enyl diphosphate. Cys-198 contacts [4Fe-4S] cluster. 4 residues coordinate (2E)-4-hydroxy-3-methylbut-2-enyl diphosphate: Ser-226, Ser-227, Asn-228, and Ser-270. Positions 226, 227, 228, and 270 each coordinate dimethylallyl diphosphate. 4 residues coordinate isopentenyl diphosphate: Ser-226, Ser-227, Asn-228, and Ser-270.

The protein belongs to the IspH family. The cofactor is [4Fe-4S] cluster.

It catalyses the reaction isopentenyl diphosphate + 2 oxidized [2Fe-2S]-[ferredoxin] + H2O = (2E)-4-hydroxy-3-methylbut-2-enyl diphosphate + 2 reduced [2Fe-2S]-[ferredoxin] + 2 H(+). The catalysed reaction is dimethylallyl diphosphate + 2 oxidized [2Fe-2S]-[ferredoxin] + H2O = (2E)-4-hydroxy-3-methylbut-2-enyl diphosphate + 2 reduced [2Fe-2S]-[ferredoxin] + 2 H(+). It participates in isoprenoid biosynthesis; dimethylallyl diphosphate biosynthesis; dimethylallyl diphosphate from (2E)-4-hydroxy-3-methylbutenyl diphosphate: step 1/1. It functions in the pathway isoprenoid biosynthesis; isopentenyl diphosphate biosynthesis via DXP pathway; isopentenyl diphosphate from 1-deoxy-D-xylulose 5-phosphate: step 6/6. Catalyzes the conversion of 1-hydroxy-2-methyl-2-(E)-butenyl 4-diphosphate (HMBPP) into a mixture of isopentenyl diphosphate (IPP) and dimethylallyl diphosphate (DMAPP). Acts in the terminal step of the DOXP/MEP pathway for isoprenoid precursor biosynthesis. This chain is 4-hydroxy-3-methylbut-2-enyl diphosphate reductase, found in Pseudomonas putida (strain ATCC 700007 / DSM 6899 / JCM 31910 / BCRC 17059 / LMG 24140 / F1).